We begin with the raw amino-acid sequence, 133 residues long: Phosphoribosyl-AMP cyclohydrolase (133 aa).

D77 contributes to the Mg(2+) binding site. C78 is a binding site for Zn(2+). D79 and D81 together coordinate Mg(2+). C95 and C102 together coordinate Zn(2+).

It belongs to the PRA-CH family. Homodimer. It depends on Mg(2+) as a cofactor. The cofactor is Zn(2+).

It is found in the cytoplasm. It catalyses the reaction 1-(5-phospho-beta-D-ribosyl)-5'-AMP + H2O = 1-(5-phospho-beta-D-ribosyl)-5-[(5-phospho-beta-D-ribosylamino)methylideneamino]imidazole-4-carboxamide. The protein operates within amino-acid biosynthesis; L-histidine biosynthesis; L-histidine from 5-phospho-alpha-D-ribose 1-diphosphate: step 3/9. Functionally, catalyzes the hydrolysis of the adenine ring of phosphoribosyl-AMP. This chain is Phosphoribosyl-AMP cyclohydrolase, found in Azotobacter chroococcum mcd 1.